A 500-amino-acid chain; its full sequence is L-arabinose isomerase (500 aa).

Mn(2+) contacts are provided by Glu-306, Glu-333, His-349, and His-448.

The protein belongs to the arabinose isomerase family. Requires Mn(2+) as cofactor.

It catalyses the reaction beta-L-arabinopyranose = L-ribulose. It participates in carbohydrate degradation; L-arabinose degradation via L-ribulose; D-xylulose 5-phosphate from L-arabinose (bacterial route): step 1/3. In terms of biological role, catalyzes the conversion of L-arabinose to L-ribulose. This Shewanella baltica (strain OS223) protein is L-arabinose isomerase.